The following is a 1025-amino-acid chain: Synapsin (1025 aa).

Disordered regions lie at residues 1 to 94 (MKRG…SRES), 439 to 784 (VCRP…NYGS), 872 to 910 (YDSN…KHSD), and 995 to 1025 (DFSD…LDLK). Over residues 34–52 (TKPPVAGGPPNMPPPPAPG) the composition is skewed to pro residues. The span at 454–463 (SRSSVSSRAE) shows a compositional bias: low complexity. Residues 472 to 492 (PTPPLPAGPRPAPMGGPPPIP) show a composition bias toward pro residues. 2 stretches are compositionally biased toward low complexity: residues 499 to 546 (VGSI…SSVS) and 594 to 626 (SETS…QFSF). At S539 the chain carries Phosphoserine. Positions 651–673 (TTASSAVRPESSVSVSDSRNTDT) are enriched in polar residues. A compositionally biased stretch (basic and acidic residues) spans 690-702 (QQERVNPFDKEPS). The segment covering 703 to 725 (KSGSAASIHTSSSSSISSSSISS) has biased composition (low complexity). The segment covering 726-735 (RINRNGNAIQ) has biased composition (polar residues). A compositionally biased stretch (pro residues) spans 736–749 (SPPPPAGPPPPPPT). The span at 750 to 759 (NVTAVGSNAN) shows a compositional bias: polar residues. A compositionally biased stretch (low complexity) spans 760–772 (SSSGYRNSFSSSL). The segment covering 872 to 904 (YDSNSIASQGEGLNNPSDLPSYTRPSYSRSESN) has biased composition (polar residues). Positions 995–1007 (DFSDSGSMSSIGS) are enriched in low complexity.

The protein belongs to the synapsin family. In terms of assembly, identified in a complex with Syt1 and nwk. As to expression, widely expressed in the embryonic and adult nervous system synaptic terminals.

The protein resides in the synapse. Functionally, plays a significant role in nervous system function, which is subtle at the cellular level but manifests itself in complex behavior. This Drosophila melanogaster (Fruit fly) protein is Synapsin (Syn).